The sequence spans 116 residues: Large ribosomal subunit protein uL22 (116 aa).

The protein belongs to the universal ribosomal protein uL22 family. As to quaternary structure, part of the 50S ribosomal subunit.

This protein binds specifically to 23S rRNA; its binding is stimulated by other ribosomal proteins, e.g. L4, L17, and L20. It is important during the early stages of 50S assembly. It makes multiple contacts with different domains of the 23S rRNA in the assembled 50S subunit and ribosome. Its function is as follows. The globular domain of the protein is located near the polypeptide exit tunnel on the outside of the subunit, while an extended beta-hairpin is found that lines the wall of the exit tunnel in the center of the 70S ribosome. The protein is Large ribosomal subunit protein uL22 of Gloeobacter violaceus (strain ATCC 29082 / PCC 7421).